Consider the following 2116-residue polypeptide: Myosin-2 heavy chain (2116 aa).

The 53-residue stretch at 30-82 (SDKRYIWYNPDPKERDSYECGEIVSETSDSFTFKTVDGQDRQVKKDDANQRNP) folds into the Myosin N-terminal SH3-like domain. One can recognise a Myosin motor domain in the interval 86 to 759 (DGVEDMSELS…QLARIEEARE (674 aa)). Position 130 is an N6,N6-dimethyllysine (K130). Residue 179–186 (GESGAGKT) coordinates ATP. Actin-binding regions lie at residues 638–660 (LASL…IPNN) and 738–752 (RFGI…GQLA). One can recognise an IQ domain in the interval 762–791 (ISEIIKAIQAATRGWIARKVYKQAREHTVA). Residues 817–2116 (ARPLLKRRNF…MADFFGGFKA (1300 aa)) adopt a coiled-coil conformation. Disordered stretches follow at residues 1295–1314 (VNEQ…KRKV), 1363–1399 (DKSV…SKKK), 1415–1444 (TAKK…DAKN), 1711–1731 (VRDQ…SKRR), 1771–1791 (LEDE…LESE), and 1805–1844 (NRSR…AAKL). 3 stretches are compositionally biased toward basic and acidic residues: residues 1375–1399 (KNEE…SKKK), 1415–1443 (TAKK…DDAK), and 1722–1731 (RSELEDSKRR). A compositionally biased stretch (basic and acidic residues) spans 1805-1832 (NRSRAEKDRKKYEKDLKDTKYKLNDEAA). 3 positions are modified to phosphothreonine; by MHCK: T1823, T1833, and T2029.

It belongs to the TRAFAC class myosin-kinesin ATPase superfamily. Myosin family. Myosin-2 heavy chain is two-headed. It self-assembles into filaments. Hexamer of 2 heavy chain subunits (MHC), 2 alkali light chain subunits (MLC) and 2 regulatory light chain subunits (MLC-2). Associates with elmoA. In terms of processing, phosphorylation inhibits thick filament formation and reduces the actin-activated ATPase activity.

The protein localises to the cytoplasm. Its subcellular location is the cell cortex. Its function is as follows. Myosin is a protein that binds to actin and has ATPase activity that is activated by actin. The sequence is that of Myosin-2 heavy chain (mhcA) from Dictyostelium discoideum (Social amoeba).